We begin with the raw amino-acid sequence, 203 residues long: Holliday junction branch migration complex subunit RuvA (203 aa).

A domain I region spans residues 1-64 (MIGRLRGIIL…EDAQLLYGFN (64 aa)). Positions 65-142 (NKQERTLFKE…KGLHGDLFTP (78 aa)) are domain II. Positions 143-154 (AADLVLTSPAGP) are flexible linker. Residues 155–203 (TADDAEQEAVAALVALGYKPQEASRMVSKIARPDANSETLIREALRAAL) are domain III.

The protein belongs to the RuvA family. Homotetramer. Forms an RuvA(8)-RuvB(12)-Holliday junction (HJ) complex. HJ DNA is sandwiched between 2 RuvA tetramers; dsDNA enters through RuvA and exits via RuvB. An RuvB hexamer assembles on each DNA strand where it exits the tetramer. Each RuvB hexamer is contacted by two RuvA subunits (via domain III) on 2 adjacent RuvB subunits; this complex drives branch migration. In the full resolvosome a probable DNA-RuvA(4)-RuvB(12)-RuvC(2) complex forms which resolves the HJ.

It is found in the cytoplasm. Its function is as follows. The RuvA-RuvB-RuvC complex processes Holliday junction (HJ) DNA during genetic recombination and DNA repair, while the RuvA-RuvB complex plays an important role in the rescue of blocked DNA replication forks via replication fork reversal (RFR). RuvA specifically binds to HJ cruciform DNA, conferring on it an open structure. The RuvB hexamer acts as an ATP-dependent pump, pulling dsDNA into and through the RuvAB complex. HJ branch migration allows RuvC to scan DNA until it finds its consensus sequence, where it cleaves and resolves the cruciform DNA. In Klebsiella pneumoniae (strain 342), this protein is Holliday junction branch migration complex subunit RuvA.